Reading from the N-terminus, the 76-residue chain is Probable small nuclear ribonucleoprotein G (76 aa).

The 73-residue stretch at 4 to 76 (AHPPEVKKYM…IVMVEALDRV (73 aa)) folds into the Sm domain.

Belongs to the snRNP Sm proteins family. In terms of assembly, interacts with the SMN complex. Core component of the spliceosomal U1, U2, U4 and U5 small nuclear ribonucleoproteins (snRNPs), the building blocks of the spliceosome. Most spliceosomal snRNPs contain a common set of Sm proteins, SNRPB, SNRPD1, SNRPD2, SNRPD3, SNRPE, SNRPF and SNRPG that assemble in a heptameric protein ring on the Sm site of the small nuclear RNA to form the core snRNP. Component of the U1 snRNP. Component of the U4/U6-U5 tri-snRNP complex. Component of the U7 snRNP complex. Component of the U11/U12 snRNPs that are part of the U12-type spliceosome.

The protein localises to the cytoplasm. The protein resides in the cytosol. It localises to the nucleus. Functionally, plays a role in pre-mRNA splicing as a core component of the spliceosomal U1, U2, U4 and U5 small nuclear ribonucleoproteins (snRNPs), the building blocks of the spliceosome. Component of both the pre-catalytic spliceosome B complex and activated spliceosome C complexes. Is also a component of the minor U12 spliceosome. The sequence is that of Probable small nuclear ribonucleoprotein G from Drosophila melanogaster (Fruit fly).